Here is a 360-residue protein sequence, read N- to C-terminus: Phospho-N-acetylmuramoyl-pentapeptide-transferase (360 aa).

Transmembrane regions (helical) follow at residues 27–47 (GALI…ISSL), 70–90 (GTPT…SILW), 93–113 (LSSV…AIGF), 134–154 (LALE…AGQE), 168–188 (LLLN…VGAG), 205–225 (VMVA…AIFA), 239–259 (LSVI…FNAP), 262–282 (AIFM…TVAV), 288–308 (IVLA…IIQV), and 337–357 (QVVI…LSTL).

Belongs to the glycosyltransferase 4 family. MraY subfamily. Requires Mg(2+) as cofactor.

The protein resides in the cell inner membrane. The enzyme catalyses UDP-N-acetyl-alpha-D-muramoyl-L-alanyl-gamma-D-glutamyl-meso-2,6-diaminopimeloyl-D-alanyl-D-alanine + di-trans,octa-cis-undecaprenyl phosphate = di-trans,octa-cis-undecaprenyl diphospho-N-acetyl-alpha-D-muramoyl-L-alanyl-D-glutamyl-meso-2,6-diaminopimeloyl-D-alanyl-D-alanine + UMP. It participates in cell wall biogenesis; peptidoglycan biosynthesis. Its function is as follows. Catalyzes the initial step of the lipid cycle reactions in the biosynthesis of the cell wall peptidoglycan: transfers peptidoglycan precursor phospho-MurNAc-pentapeptide from UDP-MurNAc-pentapeptide onto the lipid carrier undecaprenyl phosphate, yielding undecaprenyl-pyrophosphoryl-MurNAc-pentapeptide, known as lipid I. The protein is Phospho-N-acetylmuramoyl-pentapeptide-transferase of Chelativorans sp. (strain BNC1).